A 381-amino-acid chain; its full sequence is L-lactate dehydrogenase (381 aa).

The region spanning 1–380 (MIISSANDYR…TRDALVDLSK (380 aa)) is the FMN hydroxy acid dehydrogenase domain. Substrate is bound at residue Tyr-24. Residues Ser-106 and Gln-127 each coordinate FMN. Tyr-129 is a substrate binding site. Thr-155 contributes to the FMN binding site. Arg-164 contacts substrate. Residue Lys-251 participates in FMN binding. His-275 acts as the Proton acceptor in catalysis. Arg-278 contributes to the substrate binding site. 306-330 (DSGIRNGLDIVRMLALGADATMLGR) is a binding site for FMN.

This sequence belongs to the FMN-dependent alpha-hydroxy acid dehydrogenase family. FMN is required as a cofactor.

The protein localises to the cell inner membrane. The enzyme catalyses (S)-lactate + A = pyruvate + AH2. Catalyzes the conversion of L-lactate to pyruvate. Is coupled to the respiratory chain. The sequence is that of L-lactate dehydrogenase from Actinobacillus pleuropneumoniae serotype 5b (strain L20).